Here is a 208-residue protein sequence, read N- to C-terminus: Pyridoxine/pyridoxamine 5'-phosphate oxidase (208 aa).

Residues 55 to 60 (RMVLLK), 70 to 71 (YT), Lys-76, Lys-77, and Gln-99 each bind FMN. Substrate is bound at residue Lys-60. Residues Tyr-117, Arg-121, and Ser-125 each coordinate substrate. FMN-binding positions include 134-135 (QS) and Trp-179. 185–187 (RLH) contributes to the substrate binding site. Arg-189 is a binding site for FMN.

The protein belongs to the pyridoxamine 5'-phosphate oxidase family. In terms of assembly, homodimer. Requires FMN as cofactor.

It catalyses the reaction pyridoxamine 5'-phosphate + O2 + H2O = pyridoxal 5'-phosphate + H2O2 + NH4(+). It carries out the reaction pyridoxine 5'-phosphate + O2 = pyridoxal 5'-phosphate + H2O2. The protein operates within cofactor metabolism; pyridoxal 5'-phosphate salvage; pyridoxal 5'-phosphate from pyridoxamine 5'-phosphate: step 1/1. It functions in the pathway cofactor metabolism; pyridoxal 5'-phosphate salvage; pyridoxal 5'-phosphate from pyridoxine 5'-phosphate: step 1/1. Catalyzes the oxidation of either pyridoxine 5'-phosphate (PNP) or pyridoxamine 5'-phosphate (PMP) into pyridoxal 5'-phosphate (PLP). In Brucella abortus biovar 1 (strain 9-941), this protein is Pyridoxine/pyridoxamine 5'-phosphate oxidase.